The sequence spans 117 residues: MAKTSSTTKDAQDLFHAIWSAYSATPTNLKIIDLYVVFAVFTALLQDVYMALVGPFPFNSFLSGVLSCVGTAVLAVCLRIQVNKENKEFKDLGPERAFADFVLCNLVLHLVIMNFLG.

At 1-33 (MAKTSSTTKDAQDLFHAIWSAYSATPTNLKIID) the chain is on the cytoplasmic side. Residues 34–54 (LYVVFAVFTALLQDVYMALVG) traverse the membrane as a helical segment. Residues 55–57 (PFP) lie on the Lumenal side of the membrane. The helical transmembrane segment at 58-78 (FNSFLSGVLSCVGTAVLAVCL) threads the bilayer. Over 79–96 (RIQVNKENKEFKDLGPER) the chain is Cytoplasmic. A helical membrane pass occupies residues 97-117 (AFADFVLCNLVLHLVIMNFLG).

It belongs to the DAD/OST2 family. Component of the oligosaccharyltransferase (OST) complex.

It is found in the endoplasmic reticulum membrane. The protein operates within protein modification; protein glycosylation. Its function is as follows. Subunit of the oligosaccharyl transferase (OST) complex that catalyzes the initial transfer of a defined glycan (Glc(3)Man(9)GlcNAc(2) in eukaryotes) from the lipid carrier dolichol-pyrophosphate to an asparagine residue within an Asn-X-Ser/Thr consensus motif in nascent polypeptide chains, the first step in protein N-glycosylation. N-glycosylation occurs cotranslationally and the complex associates with the Sec61 complex at the channel-forming translocon complex that mediates protein translocation across the endoplasmic reticulum (ER). All subunits are required for a maximal enzyme activity. The sequence is that of Dolichyl-diphosphooligosaccharide--protein glycosyltransferase subunit DAD1 (DAD1) from Pisum sativum (Garden pea).